We begin with the raw amino-acid sequence, 142 residues long: Large ribosomal subunit protein uL13 (142 aa).

This sequence belongs to the universal ribosomal protein uL13 family. Part of the 50S ribosomal subunit.

This protein is one of the early assembly proteins of the 50S ribosomal subunit, although it is not seen to bind rRNA by itself. It is important during the early stages of 50S assembly. The sequence is that of Large ribosomal subunit protein uL13 from Xylella fastidiosa (strain 9a5c).